Here is a 205-residue protein sequence, read N- to C-terminus: Dephospho-CoA kinase (205 aa).

The DPCK domain maps to Leu7 to Thr204. Residue Gly15 to Ala20 participates in ATP binding.

Belongs to the CoaE family.

The protein localises to the cytoplasm. It catalyses the reaction 3'-dephospho-CoA + ATP = ADP + CoA + H(+). It participates in cofactor biosynthesis; coenzyme A biosynthesis; CoA from (R)-pantothenate: step 5/5. In terms of biological role, catalyzes the phosphorylation of the 3'-hydroxyl group of dephosphocoenzyme A to form coenzyme A. The sequence is that of Dephospho-CoA kinase from Aromatoleum aromaticum (strain DSM 19018 / LMG 30748 / EbN1) (Azoarcus sp. (strain EbN1)).